The chain runs to 466 residues: ATP synthase subunit beta (466 aa).

156–163 (GGAGVGKT) provides a ligand contact to ATP.

It belongs to the ATPase alpha/beta chains family. F-type ATPases have 2 components, CF(1) - the catalytic core - and CF(0) - the membrane proton channel. CF(1) has five subunits: alpha(3), beta(3), gamma(1), delta(1), epsilon(1). CF(0) has three main subunits: a(1), b(2) and c(9-12). The alpha and beta chains form an alternating ring which encloses part of the gamma chain. CF(1) is attached to CF(0) by a central stalk formed by the gamma and epsilon chains, while a peripheral stalk is formed by the delta and b chains.

The protein localises to the cell membrane. The catalysed reaction is ATP + H2O + 4 H(+)(in) = ADP + phosphate + 5 H(+)(out). Its function is as follows. Produces ATP from ADP in the presence of a proton gradient across the membrane. The catalytic sites are hosted primarily by the beta subunits. The chain is ATP synthase subunit beta from Polynucleobacter asymbioticus (strain DSM 18221 / CIP 109841 / QLW-P1DMWA-1) (Polynucleobacter necessarius subsp. asymbioticus).